The chain runs to 273 residues: Ribosomal RNA small subunit methyltransferase A (273 aa).

The S-adenosyl-L-methionine site is built by Asn-18, Leu-20, Gly-45, Glu-66, Asp-91, and Asn-113.

It belongs to the class I-like SAM-binding methyltransferase superfamily. rRNA adenine N(6)-methyltransferase family. RsmA subfamily.

Its subcellular location is the cytoplasm. The enzyme catalyses adenosine(1518)/adenosine(1519) in 16S rRNA + 4 S-adenosyl-L-methionine = N(6)-dimethyladenosine(1518)/N(6)-dimethyladenosine(1519) in 16S rRNA + 4 S-adenosyl-L-homocysteine + 4 H(+). In terms of biological role, specifically dimethylates two adjacent adenosines (A1518 and A1519) in the loop of a conserved hairpin near the 3'-end of 16S rRNA in the 30S particle. May play a critical role in biogenesis of 30S subunits. The sequence is that of Ribosomal RNA small subunit methyltransferase A from Shigella boydii serotype 18 (strain CDC 3083-94 / BS512).